A 358-amino-acid chain; its full sequence is 3-isopropylmalate dehydrogenase (358 aa).

76–89 (GPRWDNLTGAERPE) provides a ligand contact to NAD(+). Substrate-binding residues include Arg-96, Arg-106, Arg-135, and Asp-225. Positions 225, 249, and 253 each coordinate Mg(2+). Residue 283-295 (GSAPDIAGQNKAN) participates in NAD(+) binding.

The protein belongs to the isocitrate and isopropylmalate dehydrogenases family. LeuB type 1 subfamily. As to quaternary structure, homodimer. Mg(2+) is required as a cofactor. Requires Mn(2+) as cofactor.

Its subcellular location is the cytoplasm. The catalysed reaction is (2R,3S)-3-isopropylmalate + NAD(+) = 4-methyl-2-oxopentanoate + CO2 + NADH. Its pathway is amino-acid biosynthesis; L-leucine biosynthesis; L-leucine from 3-methyl-2-oxobutanoate: step 3/4. In terms of biological role, catalyzes the oxidation of 3-carboxy-2-hydroxy-4-methylpentanoate (3-isopropylmalate) to 3-carboxy-4-methyl-2-oxopentanoate. The product decarboxylates to 4-methyl-2 oxopentanoate. This chain is 3-isopropylmalate dehydrogenase, found in Oleidesulfovibrio alaskensis (strain ATCC BAA-1058 / DSM 17464 / G20) (Desulfovibrio alaskensis).